A 316-amino-acid polypeptide reads, in one-letter code: Olfactory receptor 56B2 (316 aa).

Residues 1 to 32 (MVLQELRDSNSSKFQVSEFILMGFPGIHSWQH) lie on the Extracellular side of the membrane. N-linked (GlcNAc...) asparagine glycosylation occurs at Asn10. Residues 33 to 53 (WLSLPLALLYLLALSANILIL) form a helical membrane-spanning segment. Over 54 to 61 (IIINKEAA) the chain is Cytoplasmic. A helical transmembrane segment spans residues 62 to 82 (LHQPMYYFLGILAMADIGLAT). The Extracellular segment spans residues 83–106 (TIMPKILAILWFNAKTISLLECFA). A disulfide bond links Cys104 and Cys196. The helical transmembrane segment at 107–127 (QMYAIHCFVAMESSTFVCMAI) threads the bilayer. Residues 128-146 (DRYVAICRPLRYPSIITES) are Cytoplasmic-facing. The chain crosses the membrane as a helical span at residues 147-167 (FVFKANGFMALRNSLCLISVP). Residues 168-203 (LLAAQRHYCSQNQIEHCLCSNLGVTSLSCDDRRINS) lie on the Extracellular side of the membrane. The chain crosses the membrane as a helical span at residues 204 to 224 (INQVLLAWTLMGSDLGLIILS). At 225–244 (YALILYSVLKLNSPEAASKA) the chain is on the cytoplasmic side. Residues 245–265 (LSTCTSHLILILFFYTVIIVI) traverse the membrane as a helical segment. Residues 266 to 279 (SITRSTGMRVPLIP) lie on the Extracellular side of the membrane. Residues 280–300 (VLLNVLHNVIPPALNPMVYAL) form a helical membrane-spanning segment. Topologically, residues 301 to 316 (KNKELRQGLYKVLRLE) are cytoplasmic.

Belongs to the G-protein coupled receptor 1 family.

It is found in the cell membrane. Odorant receptor. The protein is Olfactory receptor 56B2 of Homo sapiens (Human).